Reading from the N-terminus, the 302-residue chain is Arginase (302 aa).

Mn(2+)-binding residues include H103, D126, H128, and D130. Substrate-binding positions include 128-132 (HGDLN), 139-141 (SGN), and D180. Positions 229 and 231 each coordinate Mn(2+). Substrate is bound by residues T243 and E274.

Belongs to the arginase family. Mn(2+) serves as cofactor.

The catalysed reaction is L-arginine + H2O = urea + L-ornithine. Its pathway is nitrogen metabolism; urea cycle; L-ornithine and urea from L-arginine: step 1/1. This chain is Arginase (arg), found in Staphylococcus aureus (strain MSSA476).